We begin with the raw amino-acid sequence, 536 residues long: Feruloyl esterase B (536 aa).

The N-terminal stretch at 1 to 20 (MKTSIVLSIVALFLTSKASA) is a signal peptide. Positions 21–59 (DCWSERLGWPCCSDSNAEVIYVDDDGDWGVENNDWCGIQ) constitute a CBM10 domain. The cellulose-binding stretch occupies residues 22–59 (CWSERLGWPCCSDSNAEVIYVDDDGDWGVENNDWCGIQ). N-linked (GlcNAc...) asparagine glycosylation occurs at N65. Repeat copies occupy residues 78–90 (NQGG…DFGG), 91–103 (NQGG…DFGG), 104–116 (NQGG…DFGG), 117–129 (NQGG…DFGG), 134–146 (NQGG…DFGG), 151–163 (NQGG…DFGG), 164–176 (NQGG…DFGG), 181–193 (NQGG…DFGG), 194–206 (NQGG…DFGG), 211–223 (NQGG…DFGG), 224–236 (NQGG…DFGG), and 237–249 (NQGG…DFGG). The tract at residues 78-249 (NQGGGMPWGD…GGMQWGDFGG (172 aa)) is 12 X 13 AA repeats of N-Q-G-G-G-M-[PQ]-W-G-D-F-G-G. Gly residues predominate over residues 203-252 (DFGGNQGGNQGGGMPWGDFGGNQGGGMQWGDFGGNQGGGMQWGDFGGNQG). The segment at 203–273 (DFGGNQGGNQ…SGPTVEYSTD (71 aa)) is disordered. A catalytic region spans residues 257-536 (WGNQGGNSGP…WDFVKQFSLP (280 aa)).

Component of the multienzyme cellulase-hemicellulase complex.

The protein resides in the secreted. The enzyme catalyses feruloyl-polysaccharide + H2O = ferulate + polysaccharide.. Its activity is regulated as follows. Inhibited by the specific serine esterase inhibitor AEBSF. Its function is as follows. Involved in degradation of plant cell walls. Hydrolyzes of the feruloyl-arabinose ester bond in arabinoxylans as well as the feruloyl-galactose and feruloyl-arabinose ester bonds in pectin. The polypeptide is Feruloyl esterase B (ESTA) (Piromyces equi).